Reading from the N-terminus, the 149-residue chain is D-aminoacyl-tRNA deacylase (149 aa).

Positions 137–138 (GP) match the Gly-cisPro motif, important for rejection of L-amino acids motif.

The protein belongs to the DTD family. Homodimer.

The protein localises to the cytoplasm. It catalyses the reaction glycyl-tRNA(Ala) + H2O = tRNA(Ala) + glycine + H(+). It carries out the reaction a D-aminoacyl-tRNA + H2O = a tRNA + a D-alpha-amino acid + H(+). Its function is as follows. An aminoacyl-tRNA editing enzyme that deacylates mischarged D-aminoacyl-tRNAs. Also deacylates mischarged glycyl-tRNA(Ala), protecting cells against glycine mischarging by AlaRS. Acts via tRNA-based rather than protein-based catalysis; rejects L-amino acids rather than detecting D-amino acids in the active site. By recycling D-aminoacyl-tRNA to D-amino acids and free tRNA molecules, this enzyme counteracts the toxicity associated with the formation of D-aminoacyl-tRNA entities in vivo and helps enforce protein L-homochirality. This Clostridium beijerinckii (strain ATCC 51743 / NCIMB 8052) (Clostridium acetobutylicum) protein is D-aminoacyl-tRNA deacylase.